A 306-amino-acid polypeptide reads, in one-letter code: Ribonuclease Z (306 aa).

Residues His61, His63, Asp65, His66, His137, Asp207, and His263 each coordinate Zn(2+). The active-site Proton acceptor is the Asp65.

The protein belongs to the RNase Z family. Homodimer. The cofactor is Zn(2+).

It catalyses the reaction Endonucleolytic cleavage of RNA, removing extra 3' nucleotides from tRNA precursor, generating 3' termini of tRNAs. A 3'-hydroxy group is left at the tRNA terminus and a 5'-phosphoryl group is left at the trailer molecule.. In terms of biological role, zinc phosphodiesterase, which displays some tRNA 3'-processing endonuclease activity. Probably involved in tRNA maturation, by removing a 3'-trailer from precursor tRNA. This chain is Ribonuclease Z, found in Thermococcus sibiricus (strain DSM 12597 / MM 739).